The sequence spans 72 residues: MSYQQQQCKQPCQPPPVCPTPKCPEPCPPPKCPEPCPPPKCPQPCPPQQCQQKYPPVTPSPPCQPKYPPKSK.

Positions 1–11 are enriched in low complexity; sequence MSYQQQQCKQP. Residues 1 to 20 are disordered; that stretch reads MSYQQQQCKQPCQPPPVCPT. A run of 3 repeats spans residues 21–29, 30–38, and 39–47. Residues 21–47 are 3 X 9 AA tandem repeats of P-K-C-P-[EQ]-P-C-P-P; sequence PKCPEPCPPPKCPEPCPPPKCPQPCPP. The segment at 42–72 is disordered; that stretch reads PQPCPPQQCQQKYPPVTPSPPCQPKYPPKSK. The segment covering 56-72 has biased composition (pro residues); it reads PVTPSPPCQPKYPPKSK.

This sequence belongs to the cornifin (SPRR) family. In terms of tissue distribution, suprabasal layers of squamous-differentiated tissues such as epidermis, esophagus, tongue and trachea.

The protein localises to the cytoplasm. In terms of biological role, cross-linked envelope protein of keratinocytes. It is a keratinocyte protein that first appears in the cell cytosol, but ultimately becomes cross-linked to membrane proteins by transglutaminase. All that results in the formation of an insoluble envelope beneath the plasma membrane. The polypeptide is Small proline-rich protein 2B (SPRR2B) (Homo sapiens (Human)).